The following is a 211-amino-acid chain: MPVVAVIDYEMGNLHSVCKGLEKAGATPIITHCHQELTKADAVILPGVGAFDPAVQSLRSRDLEQPIKDTIASGKPFLGICLGLQILFESSAEGNQPGLGIIKGKVRRFVWEPGITIPHMGWNQLELTQPKSILWEHLPPQPWVYFVHSYYVDPFEPQVRAATVTHGTQTVTAAIAHENLMAVQFHPEKSSNIGLQILSNFVSQVREKIAA.

The region spanning 3-211 (VVAVIDYEMG…VSQVREKIAA (209 aa)) is the Glutamine amidotransferase type-1 domain. The Nucleophile role is filled by Cys-81. Catalysis depends on residues His-186 and Glu-188.

In terms of assembly, heterodimer of HisH and HisF.

It is found in the cytoplasm. It carries out the reaction 5-[(5-phospho-1-deoxy-D-ribulos-1-ylimino)methylamino]-1-(5-phospho-beta-D-ribosyl)imidazole-4-carboxamide + L-glutamine = D-erythro-1-(imidazol-4-yl)glycerol 3-phosphate + 5-amino-1-(5-phospho-beta-D-ribosyl)imidazole-4-carboxamide + L-glutamate + H(+). The catalysed reaction is L-glutamine + H2O = L-glutamate + NH4(+). The protein operates within amino-acid biosynthesis; L-histidine biosynthesis; L-histidine from 5-phospho-alpha-D-ribose 1-diphosphate: step 5/9. In terms of biological role, IGPS catalyzes the conversion of PRFAR and glutamine to IGP, AICAR and glutamate. The HisH subunit catalyzes the hydrolysis of glutamine to glutamate and ammonia as part of the synthesis of IGP and AICAR. The resulting ammonia molecule is channeled to the active site of HisF. This is Imidazole glycerol phosphate synthase subunit HisH from Nostoc sp. (strain PCC 7120 / SAG 25.82 / UTEX 2576).